Reading from the N-terminus, the 129-residue chain is Ribosome-binding factor A (129 aa).

It belongs to the RbfA family. As to quaternary structure, monomer. Binds 30S ribosomal subunits, but not 50S ribosomal subunits or 70S ribosomes.

Its subcellular location is the cytoplasm. Its function is as follows. One of several proteins that assist in the late maturation steps of the functional core of the 30S ribosomal subunit. Associates with free 30S ribosomal subunits (but not with 30S subunits that are part of 70S ribosomes or polysomes). Required for efficient processing of 16S rRNA. May interact with the 5'-terminal helix region of 16S rRNA. This is Ribosome-binding factor A from Stutzerimonas stutzeri (strain A1501) (Pseudomonas stutzeri).